A 401-amino-acid polypeptide reads, in one-letter code: Elongation factor Tu (401 aa).

Residues 10-209 (KPHINVGTIG…AVDEYIPTPQ (200 aa)) enclose the tr-type G domain. Residues 19–26 (GHVDHGKT) form a G1 region. Position 19–26 (19–26 (GHVDHGKT)) interacts with GTP. T26 provides a ligand contact to Mg(2+). The interval 60 to 64 (GITIA) is G2. Residues 81-84 (DCPG) form a G3 region. Residues 81–85 (DCPGH) and 136–139 (NKVD) contribute to the GTP site. The G4 stretch occupies residues 136-139 (NKVD). The segment at 174–176 (SAR) is G5.

This sequence belongs to the TRAFAC class translation factor GTPase superfamily. Classic translation factor GTPase family. EF-Tu/EF-1A subfamily. As to quaternary structure, monomer.

It localises to the cytoplasm. It carries out the reaction GTP + H2O = GDP + phosphate + H(+). GTP hydrolase that promotes the GTP-dependent binding of aminoacyl-tRNA to the A-site of ribosomes during protein biosynthesis. This Chloroflexus aurantiacus (strain ATCC 29366 / DSM 635 / J-10-fl) protein is Elongation factor Tu.